The following is a 331-amino-acid chain: Probable mannose-1-phosphate guanylyltransferase 3 (331 aa).

A diphosphate-binding site is contributed by Lys-3. Residues Gly-66, Asn-90, Asp-92, Gly-127, and Asn-154 each contribute to the GDP-alpha-D-mannose site.

It belongs to the transferase hexapeptide repeat family.

The catalysed reaction is alpha-D-mannose 1-phosphate + GTP + H(+) = GDP-alpha-D-mannose + diphosphate. Its pathway is nucleotide-sugar biosynthesis; GDP-alpha-D-mannose biosynthesis; GDP-alpha-D-mannose from alpha-D-mannose 1-phosphate (GTP route): step 1/1. Its function is as follows. Catalyzes a reaction of the Smirnoff-Wheeler pathway, the major route to ascorbate biosynthesis in plants. The protein is Probable mannose-1-phosphate guanylyltransferase 3 of Arabidopsis thaliana (Mouse-ear cress).